Consider the following 264-residue polypeptide: Tryptophan synthase alpha chain (264 aa).

Residues E44 and D55 each act as proton acceptor in the active site.

It belongs to the TrpA family. In terms of assembly, tetramer of two alpha and two beta chains.

It carries out the reaction (1S,2R)-1-C-(indol-3-yl)glycerol 3-phosphate + L-serine = D-glyceraldehyde 3-phosphate + L-tryptophan + H2O. The protein operates within amino-acid biosynthesis; L-tryptophan biosynthesis; L-tryptophan from chorismate: step 5/5. The alpha subunit is responsible for the aldol cleavage of indoleglycerol phosphate to indole and glyceraldehyde 3-phosphate. The polypeptide is Tryptophan synthase alpha chain (Lactiplantibacillus plantarum (strain ATCC BAA-793 / NCIMB 8826 / WCFS1) (Lactobacillus plantarum)).